Reading from the N-terminus, the 20-residue chain is Thylakoid lumenal 20 kDa protein (20 aa).

The disordered stretch occupies residues 1 to 20 (RDVDVGSFLPKSPSDPSMVL).

The protein localises to the plastid. It localises to the chloroplast thylakoid lumen. The chain is Thylakoid lumenal 20 kDa protein from Spinacia oleracea (Spinach).